The following is a 362-amino-acid chain: tRNA-specific 2-thiouridylase MnmA (362 aa).

ATP is bound by residues 6-13 (AMSGGVDS) and Leu-32. Catalysis depends on Cys-101, which acts as the Nucleophile. A disulfide bond links Cys-101 and Cys-197. Gly-125 serves as a coordination point for ATP. Residues 147–149 (KDQ) are interaction with tRNA. Cys-197 (cysteine persulfide intermediate) is an active-site residue.

It belongs to the MnmA/TRMU family.

The protein localises to the cytoplasm. It catalyses the reaction S-sulfanyl-L-cysteinyl-[protein] + uridine(34) in tRNA + AH2 + ATP = 2-thiouridine(34) in tRNA + L-cysteinyl-[protein] + A + AMP + diphosphate + H(+). Its function is as follows. Catalyzes the 2-thiolation of uridine at the wobble position (U34) of tRNA, leading to the formation of s(2)U34. The sequence is that of tRNA-specific 2-thiouridylase MnmA from Acidothermus cellulolyticus (strain ATCC 43068 / DSM 8971 / 11B).